A 142-amino-acid polypeptide reads, in one-letter code: UPF0102 protein Bcep1808_0248 (142 aa).

It belongs to the UPF0102 family.

This is UPF0102 protein Bcep1808_0248 from Burkholderia vietnamiensis (strain G4 / LMG 22486) (Burkholderia cepacia (strain R1808)).